The primary structure comprises 454 residues: Glutaredoxin domain-containing cysteine-rich protein CG31559 (454 aa).

2 disordered regions span residues 30 to 88 and 217 to 239; these read ETAD…QRQK and RSARSGDEADHSTGAGSEAGSDS. Residues 33–45 show a composition bias toward polar residues; that stretch reads DSGNGSDLESTGL. Residues 58–69 show a composition bias toward low complexity; sequence SSLGSDSMHGSS. Residues 70–84 show a composition bias toward polar residues; the sequence is TEYVRQSASQPSGQR. The segment covering 217–227 has biased composition (basic and acidic residues); it reads RSARSGDEADH. The region spanning 295–400 is the Glutaredoxin domain; sequence NAKNFKEKDL…QLLKPYKSMA (106 aa).

The protein belongs to the GRXCR1 family.

This is Glutaredoxin domain-containing cysteine-rich protein CG31559 from Drosophila melanogaster (Fruit fly).